A 258-amino-acid polypeptide reads, in one-letter code: Regulatory protein RecX (258 aa).

This sequence belongs to the RecX family.

It localises to the cytoplasm. Functionally, modulates RecA activity. This is Regulatory protein RecX from Streptococcus equi subsp. zooepidemicus (strain MGCS10565).